The primary structure comprises 492 residues: 2,3-bisphosphoglycerate-independent phosphoglycerate mutase (492 aa).

Asp11 and Ser61 together coordinate Mn(2+). The active-site Phosphoserine intermediate is the Ser61. Residues His118, 147-148 (RD), Arg178, Arg184, 248-251 (RNDR), and Lys320 contribute to the substrate site. 5 residues coordinate Mn(2+): Asp386, His390, Asp427, His428, and His445.

Belongs to the BPG-independent phosphoglycerate mutase family. Monomer. Mn(2+) is required as a cofactor.

The enzyme catalyses (2R)-2-phosphoglycerate = (2R)-3-phosphoglycerate. It participates in carbohydrate degradation; glycolysis; pyruvate from D-glyceraldehyde 3-phosphate: step 3/5. In terms of biological role, catalyzes the interconversion of 2-phosphoglycerate and 3-phosphoglycerate. This chain is 2,3-bisphosphoglycerate-independent phosphoglycerate mutase, found in Campylobacter jejuni subsp. jejuni serotype O:23/36 (strain 81-176).